A 356-amino-acid chain; its full sequence is Zinc finger CCCH domain-containing protein 49 (356 aa).

2 C3H1-type zinc fingers span residues 120–146 (YSGT…HGVF) and 155–177 (YRTQ…AHSP). Residues 209–235 (ISPVSGSPPMSPRADSESSPMTQSLSR) form a disordered region. The span at 225–235 (ESSPMTQSLSR) shows a compositional bias: polar residues.

The chain is Zinc finger CCCH domain-containing protein 49 from Arabidopsis thaliana (Mouse-ear cress).